Reading from the N-terminus, the 355-residue chain is Guanine nucleotide-binding protein G(i) subunit alpha-2 (355 aa).

The N-myristoyl glycine moiety is linked to residue Gly2. A lipid anchor (S-palmitoyl cysteine) is attached at Cys3. The G-alpha domain maps to 32–355; sequence REVKLLLLGA…KNNLKDCGLF (324 aa). The tract at residues 35 to 48 is G1 motif; that stretch reads KLLLLGAGESGKST. GTP-binding positions include 40-47, 176-182, 201-205, 270-273, and Ala327; these read GAGESGKS, LRTRVKT, DVGGQ, and NKKD. Mg(2+) is bound by residues Ser47 and Thr182. Residues 174–182 are G2 motif; it reads DVLRTRVKT. Residues 197–206 are G3 motif; that stretch reads FKMFDVGGQR. Residues 266-273 are G4 motif; sequence ILFLNKKD. The tract at residues 325 to 330 is G5 motif; the sequence is TCATDT.

It belongs to the G-alpha family. G(i/o/t/z) subfamily. As to quaternary structure, g proteins are composed of 3 units; alpha, beta and gamma. The alpha chain contains the guanine nucleotide binding site. In this context, interacts with GNB2. Interacts with UNC5B. Interacts with GPSM1. Interacts with RGS12 and RGS14. Interacts (inactive GDP-bound form) with NUCB1 (via GBA motif); the interaction leads to activation of GNAI3. Interacts (inactive GDP-bound form) with CCDC88C/DAPLE (via GBA motif). Interacts (inactive GDP-bound form) with CCDC8A/GIV (via GBA motif). Interacts with CXCR1 and CXCR2.

It is found in the cytoplasm. Its subcellular location is the cytoskeleton. The protein resides in the microtubule organizing center. It localises to the centrosome. The protein localises to the cell membrane. It is found in the membrane. Functionally, guanine nucleotide-binding proteins (G proteins) are involved as modulators or transducers in various transmembrane signaling systems. The G(i) proteins are involved in hormonal regulation of adenylate cyclase: they inhibit the cyclase in response to beta-adrenergic stimuli. May play a role in cell division. This Canis lupus familiaris (Dog) protein is Guanine nucleotide-binding protein G(i) subunit alpha-2 (GNAI2).